Here is a 333-residue protein sequence, read N- to C-terminus: Perchlorate reductase subunit beta (333 aa).

In terms of domain architecture, 4Fe-4S ferredoxin-type 1 spans 12–40; sequence LTYVTDLNKCIGCQTCTVACKKLWTTGPG. Positions 21, 24, 27, and 31 each coordinate [4Fe-4S] cluster. The interval 101-121 is disordered; sequence KERVRPSPTPRSAPNWDEDQG. 4Fe-4S ferredoxin-type domains lie at 128–159 and 161–190; these read NSFF…KREQ and GIVV…FNPV. [4Fe-4S] cluster is bound by residues Cys137, Cys140, and Cys145. 3 residues coordinate [3Fe-4S] cluster: Cys149, Cys170, and Cys176. 5 residues coordinate [4Fe-4S] cluster: Cys180, Cys197, Cys200, Cys212, and Cys216.

In terms of assembly, heterotrimer of alpha, beta and gamma subunits. Requires [3Fe-4S] cluster as cofactor. The cofactor is [4Fe-4S] cluster.

It is found in the periplasm. Its function is as follows. Component of the perchlorate reductase that catalyzes the reduction of perchlorate to chlorite and allows anaerobic growth on perchlorate as the sole electron acceptor. The beta subunit may be responsible for electron transfer to the catalytic alpha subunit PcrA. In Dechloromonas aromatica (strain RCB), this protein is Perchlorate reductase subunit beta (pcrB).